Here is a 323-residue protein sequence, read N- to C-terminus: Breast cancer metastasis-suppressor 1-like protein (323 aa).

Residues 1-15 (MPVHSREKKENNHDE) show a composition bias toward basic and acidic residues. Positions 1–56 (MPVHSREKKENNHDEMEVDYGENEGSTSEEEETESSSVSEEGDSSEMDDEDCERRR) are disordered. Acidic residues predominate over residues 16–51 (MEVDYGENEGSTSEEEETESSSVSEEGDSSEMDDED). Coiled coils occupy residues 50–82 (EDCE…KERL) and 147–178 (EKLL…ITSE).

The protein belongs to the BRMS1 family.

It is found in the nucleus. Involved in the histone deacetylase (HDAC1)-dependent transcriptional repression activity. The protein is Breast cancer metastasis-suppressor 1-like protein (BRMS1L) of Gallus gallus (Chicken).